The sequence spans 264 residues: Undecaprenyl-diphosphatase (264 aa).

6 helical membrane passes run 41 to 61 (NLAFTIVVHVATVCSTLVILW), 82 to 102 (YVINIVISMIPIGIVGVFFKD), 106 to 126 (AIFGSGLMIVGCMLLLTAALL), 140 to 160 (ISMKDAFIIGLAQACAVLPGL), 213 to 233 (IPALSLIVGFLAAFVAGCLAC), and 244 to 264 (KLIYFAIYCAIAGLAVIITQL).

The protein belongs to the UppP family.

It is found in the cell inner membrane. It catalyses the reaction di-trans,octa-cis-undecaprenyl diphosphate + H2O = di-trans,octa-cis-undecaprenyl phosphate + phosphate + H(+). Its function is as follows. Catalyzes the dephosphorylation of undecaprenyl diphosphate (UPP). Confers resistance to bacitracin. This chain is Undecaprenyl-diphosphatase, found in Bacteroides thetaiotaomicron (strain ATCC 29148 / DSM 2079 / JCM 5827 / CCUG 10774 / NCTC 10582 / VPI-5482 / E50).